Consider the following 258-residue polypeptide: Microtubule-associated protein RP/EB family member 1 (258 aa).

Residues 14 to 116 form the Calponin-homology (CH) domain; sequence NLSRHDMLAW…FVQWFKKFFD (103 aa). The EB1 C-terminal domain occupies 175–245; the sequence is KKAAGDDESA…LYATDEGFVI (71 aa).

Belongs to the MAPRE family.

It localises to the cytoplasm. Its subcellular location is the cytoskeleton. It is found in the microtubule organizing center. The protein resides in the centrosome. The protein localises to the golgi apparatus. It localises to the spindle. Its subcellular location is the spindle pole. Functionally, plus-end tracking protein (+TIP) that binds to the plus-end of microtubules and regulates the dynamics of the microtubule cytoskeleton. Promotes cytoplasmic microtubule nucleation and elongation. Involved in mitotic spindle positioning by stabilizing microtubules and promoting dynamic connection between astral microtubules and the cortex during mitotic chromosome segregation. The polypeptide is Microtubule-associated protein RP/EB family member 1 (MAPRE1) (Gallus gallus (Chicken)).